A 273-amino-acid chain; its full sequence is Tetraspanin-8 (273 aa).

At Met1–Asn7 the chain is on the cytoplasmic side. The helical transmembrane segment at Leu8–Ile28 threads the bilayer. At Trp29–Pro45 the chain is on the extracellular side. Residues Val46–Cys66 form a helical membrane-spanning segment. Residues Arg67–Tyr75 are Cytoplasmic-facing. A helical transmembrane segment spans residues Leu76–Val96. Over Thr97–Ala235 the chain is Extracellular. Asn192 carries N-linked (GlcNAc...) asparagine glycosylation. Residues Ile236–Phe256 form a helical membrane-spanning segment. The Cytoplasmic segment spans residues Arg257–Pro273.

Belongs to the tetraspanin (TM4SF) family.

The protein localises to the membrane. Its function is as follows. May be involved in the regulation of cell differentiation. The chain is Tetraspanin-8 (TET8) from Arabidopsis thaliana (Mouse-ear cress).